The primary structure comprises 615 residues: Chaperone protein HscA homolog (615 aa).

Belongs to the heat shock protein 70 family.

In terms of biological role, chaperone involved in the maturation of iron-sulfur cluster-containing proteins. Has a low intrinsic ATPase activity which is markedly stimulated by HscB. The protein is Chaperone protein HscA homolog of Aeromonas hydrophila subsp. hydrophila (strain ATCC 7966 / DSM 30187 / BCRC 13018 / CCUG 14551 / JCM 1027 / KCTC 2358 / NCIMB 9240 / NCTC 8049).